Here is a 347-residue protein sequence, read N- to C-terminus: MAVKVSIIGATGYTGAELVRILSRHPQAELVALTTQSYAGKKFWEVYPHLYGYNQLTCEEMNLPEIMESSDIVFVALPHGHAMPAAREAARRGRKLIDLGADFRLKDFRTYEQWYRVEHTARELLAGAVYGLPEVNRREIREAWLVANPGCYPTSAILALAPLLKNRLIDTSSIIIDSKSGVSGAGRGLALGSHFSEVNENFKAYNVAVHRHTPEIEQELGRIAGEDVAVTFTPHLLPVTRGILSTVYAKLAAPAGEEEIREVYLDYYRGEPFVRVLPAGMLPQIKWVAGTNHCDIGLTVDRRTGRVVVLSAIDNLVKGASGQAVQNMNIICGLPEDTGLAGPGLYP.

The active site involves C151.

The protein belongs to the NAGSA dehydrogenase family. Type 1 subfamily.

The protein localises to the cytoplasm. It catalyses the reaction N-acetyl-L-glutamate 5-semialdehyde + phosphate + NADP(+) = N-acetyl-L-glutamyl 5-phosphate + NADPH + H(+). It functions in the pathway amino-acid biosynthesis; L-arginine biosynthesis; N(2)-acetyl-L-ornithine from L-glutamate: step 3/4. Functionally, catalyzes the NADPH-dependent reduction of N-acetyl-5-glutamyl phosphate to yield N-acetyl-L-glutamate 5-semialdehyde. The sequence is that of N-acetyl-gamma-glutamyl-phosphate reductase from Pelotomaculum thermopropionicum (strain DSM 13744 / JCM 10971 / SI).